Reading from the N-terminus, the 1521-residue chain is Protein OPAQUE1 (1521 aa).

The Myosin N-terminal SH3-like domain occupies 4-53 (RKGLKVWVEEKGEGWVEAEVVEAKERAVVVFSSQRKKITVSPEKLLPRDT). Residues 60–731 (GHVDDMTKLT…QIAILDMRRA (672 aa)) form the Myosin motor domain. Residues 155–162 (GESGAGKT) and 208–216 (NDNSSRFGK) contribute to the ATP site. Actin-binding regions lie at residues 493 to 527 (LIEK…FRNF), 529 to 552 (SHLR…AGKV), 587 to 612 (FTSL…KLQL), and 612 to 634 (LQAL…KPNS). IQ domains follow at residues 733 to 755 (ILDN…KEFV), 756 to 778 (KTRE…KMFA), 781 to 803 (RETA…RAHL), 804 to 826 (QACL…RYFS), 829 to 851 (REHK…ILFQ), and 852 to 874 (NYRQ…KELR). Coiled coils occupy residues 870 to 910 (RKEL…ERRL) and 974 to 1050 (SAEA…LRQK). The region spanning 1162 to 1459 (DHVIEAINDV…VAAMREMVNK (298 aa)) is the Dilute domain.

Belongs to the TRAFAC class myosin-kinesin ATPase superfamily. Myosin family. Plant myosin class XI subfamily. In terms of assembly, interacts (via C-terminus) with HIP (via C-terminus), but not with zeins, FL1 or intrinsic proteins of protein bodies. High expression in kernels and stems, intermediate in ears and leaves, and low in roots, silks and tassels.

Its subcellular location is the cytoplasm. Myosin XI motor protein required for endoplasmic reticulum motility and protein body formation. May function by binding with its tail domain to receptor proteins on membranes and exerting force with its N-terminal motor domain against actin filaments, thereby transporting its cargo along polarized actin cables. The protein is Protein OPAQUE1 of Zea mays (Maize).